The sequence spans 265 residues: 3-methyl-2-oxobutanoate hydroxymethyltransferase (265 aa).

Residues aspartate 45 and aspartate 84 each coordinate Mg(2+). 3-methyl-2-oxobutanoate contacts are provided by residues 45–46, aspartate 84, and lysine 112; that span reads DS. Glutamate 114 provides a ligand contact to Mg(2+). Glutamate 181 serves as the catalytic Proton acceptor.

Belongs to the PanB family. In terms of assembly, homodecamer; pentamer of dimers. Mg(2+) is required as a cofactor.

Its subcellular location is the cytoplasm. The enzyme catalyses 3-methyl-2-oxobutanoate + (6R)-5,10-methylene-5,6,7,8-tetrahydrofolate + H2O = 2-dehydropantoate + (6S)-5,6,7,8-tetrahydrofolate. Its pathway is cofactor biosynthesis; (R)-pantothenate biosynthesis; (R)-pantoate from 3-methyl-2-oxobutanoate: step 1/2. In terms of biological role, catalyzes the reversible reaction in which hydroxymethyl group from 5,10-methylenetetrahydrofolate is transferred onto alpha-ketoisovalerate to form ketopantoate. This Yersinia pseudotuberculosis serotype IB (strain PB1/+) protein is 3-methyl-2-oxobutanoate hydroxymethyltransferase.